The following is a 121-amino-acid chain: uncharacterized protein (121 aa).

An ATP-binding site is contributed by 77–84 (AALSFGKT).

This is an uncharacterized protein from Saccharomyces cerevisiae (strain ATCC 204508 / S288c) (Baker's yeast).